Reading from the N-terminus, the 186-residue chain is MEKDNLKKILQEKMEKAIKVLGNELKGLRTGRASINFLDSVTVEAYGSKIPLSQVASLSTPDARTINVQVWDKSMVSSVEKGITIANLGLTHATDGQLIRLPIPSLTEERRKELVKLAHKYGEETKISLRNIRRDGIEELKKLEKDNIIVKDEYHNLSEQIQKLTDEYSSKVDSAIKQKEQEIMTV.

It belongs to the RRF family.

The protein localises to the cytoplasm. Responsible for the release of ribosomes from messenger RNA at the termination of protein biosynthesis. May increase the efficiency of translation by recycling ribosomes from one round of translation to another. This Rickettsia prowazekii (strain Madrid E) protein is Ribosome-recycling factor.